The chain runs to 168 residues: DAZ-associated protein 2 (168 aa).

Positions 1–13 (MNSKGQYPTQPTY) are enriched in low complexity. Positions 1–25 (MNSKGQYPTQPTYPVQPPGNPVYPQ) are disordered. A PPAY motif is present at residues 39–42 (PPAY). Ser-77 carries the phosphoserine modification.

As to quaternary structure, interacts with SOX6. Interacts with DAZ1 and DAZL. Interacts with IL17RB. May interact with FAM168B. Interacts with INCA1. Interacts with EIF4G1 and EIF4G2. Interacts (via PPAY motif) with NEDD4 (via WW domains). Interacts with transcription factor TCF4; the interaction results in localization of DAZAP2 to the nucleus. Interacts with transcription factors TCF7 and TCF7L1. Interacts with transcription factor LEF1. Interacts with serine/threonine-protein kinase HIPK2; the interaction results in phosphorylation of DAZAP2 which causes localization of DAZAP2 to the nucleus, reduces interaction of DAZAP2 with HIPK2 and prevents DAZAP2-dependent degradation of HIPK2. Interacts with ubiquitin ligase SIAH1; the interaction is decreased following phosphorylation of DAZAP2 by HIPK2. Interacts with TP53; the interaction is triggered by DNA damage. Ubiquitinated by SMURF2, leading to proteasomal degradation. Ubiquitinated by NEDD4, leading to proteasomal degradation. Post-translationally, following DNA damage, phosphorylated by HIPK2 which promotes DAZAP2 localization to the nucleus, reduces interaction of DAZAP2 with HIPK2 and SIAH1, and prevents DAZAP2-dependent ubiquitination of HIPK2 by E3 ubiquitin-protein ligase SIAH1 and subsequent HIPK2 proteasomal degradation. Widely expressed. Highly expressed in brain.

The protein resides in the cytoplasm. It is found in the nucleus. The protein localises to the nucleus speckle. Its subcellular location is the nuclear body. It localises to the stress granule. In unstressed cells, promotes SIAH1-mediated polyubiquitination and degradation of the serine/threonine-protein kinase HIPK2, probably by acting as a loading factor that potentiates complex formation between HIPK2 and ubiquitin ligase SIAH1. In response to DNA damage, localizes to the nucleus following phosphorylation by HIPK2 and modulates the expression of a subset of TP53/p53 target genes by binding to TP53 at target gene promoters. This limits the expression of a number of cell death-mediating TP53 target genes, reducing DNA damage-induced cell death. Enhances the binding of transcription factor TCF7L2/TCF4, a Wnt signaling pathway effector, to the promoters of target genes. Plays a role in stress granule formation. This Mus musculus (Mouse) protein is DAZ-associated protein 2 (Dazap2).